The chain runs to 285 residues: 4-diphosphocytidyl-2-C-methyl-D-erythritol kinase (285 aa).

K12 is a catalytic residue. Residue 95 to 105 (PMGGGVGGGSS) coordinates ATP. The active site involves D137.

Belongs to the GHMP kinase family. IspE subfamily.

It carries out the reaction 4-CDP-2-C-methyl-D-erythritol + ATP = 4-CDP-2-C-methyl-D-erythritol 2-phosphate + ADP + H(+). Its pathway is isoprenoid biosynthesis; isopentenyl diphosphate biosynthesis via DXP pathway; isopentenyl diphosphate from 1-deoxy-D-xylulose 5-phosphate: step 3/6. In terms of biological role, catalyzes the phosphorylation of the position 2 hydroxy group of 4-diphosphocytidyl-2C-methyl-D-erythritol. This Actinobacillus pleuropneumoniae serotype 5b (strain L20) protein is 4-diphosphocytidyl-2-C-methyl-D-erythritol kinase.